The primary structure comprises 154 residues: Large ribosomal subunit protein uL13 (154 aa).

It belongs to the universal ribosomal protein uL13 family. Part of the 50S ribosomal subunit.

In terms of biological role, this protein is one of the early assembly proteins of the 50S ribosomal subunit, although it is not seen to bind rRNA by itself. It is important during the early stages of 50S assembly. The chain is Large ribosomal subunit protein uL13 from Bartonella tribocorum (strain CIP 105476 / IBS 506).